The chain runs to 126 residues: Hydrogenase maturation factor HypA (126 aa).

His2 contributes to the Ni(2+) binding site. Cys78, Cys81, Cys97, and Cys100 together coordinate Zn(2+).

Belongs to the HypA/HybF family.

In terms of biological role, involved in the maturation of [NiFe] hydrogenases. Required for nickel insertion into the metal center of the hydrogenase. The polypeptide is Hydrogenase maturation factor HypA (Methanococcus maripaludis (strain C6 / ATCC BAA-1332)).